A 106-amino-acid chain; its full sequence is MNDSEFHQLADQLMLCIEETLDGFSGDSDIDYETNGGVMTLTFENGSKIVINRQEPLHQVWLATKAGGYHFDYREGHWYCSRSGEEFFTKLSEAATAQAGEVVSFS.

This sequence belongs to the frataxin family.

Its function is as follows. Involved in iron-sulfur (Fe-S) cluster assembly. May act as a regulator of Fe-S biogenesis. The chain is Iron-sulfur cluster assembly protein CyaY from Yersinia enterocolitica serotype O:8 / biotype 1B (strain NCTC 13174 / 8081).